A 476-amino-acid chain; its full sequence is Protein transport protein Sec61 subunit alpha isoform A (476 aa).

At 2 to 33 (GIKFLEVIKPFCAVLPEIQKPERKIQFREKVL) the chain is on the cytoplasmic side. Residues 34–53 (WTAITLFIFLVCCQIPLFGI) traverse the membrane as a helical segment. The Lumenal segment spans residues 54-76 (MSSDSADPFYWMRVILASNRGTL). The helical transmembrane segment at 77–96 (MELGISPIVTSGLIMQLLAG) threads the bilayer. Topologically, residues 97–117 (AKIIEVGDTPKDRALFNGAQK) are cytoplasmic. Residues 118–138 (LFGMIITIGQSIVYVMTGMYG) form a helical membrane-spanning segment. Residues 139 to 144 (DPSEMG) are Lumenal-facing. The helical transmembrane segment at 145 to 165 (AGICLLIIIQLFVAGLIVLLL) threads the bilayer. Residues 166 to 172 (DELLQKG) lie on the Cytoplasmic side of the membrane. Residues 173 to 193 (YGLGSGISLFIATNICETIVW) form a helical membrane-spanning segment. Topologically, residues 194–240 (KAFSPTTVNTGRGTEFEGAIIALFHLLATRTDKVRALREAFYRQNLP) are lumenal. A helical transmembrane segment spans residues 241-261 (NLLNLIATVFVFAVVIYFQGF). Over 262–288 (RVDLPIKSARYRGQYNTYPIKLFYTSN) the chain is Cytoplasmic. The chain crosses the membrane as a helical span at residues 289-309 (IPIILQSALVSNLYVISQMLS). Over 310 to 354 (TRFSGNFLVNLLGTWSDTSTGGPARAYPVGGLCYFLSPPESFGSV) the chain is Lumenal. Residues 355–375 (LDDPIHAAIYIVFMLGSCAFF) traverse the membrane as a helical segment. Over 376–420 (SKTWIEVSGSSAKDVAKQLKEQQMVMGGHRETSMVHELNRYIPTA) the chain is Cytoplasmic. Residues 421–441 (AAFGGLCIGGLSVMADFLGAI) traverse the membrane as a helical segment. At 442–445 (GSGT) the chain is on the lumenal side. A helical membrane pass occupies residues 446 to 462 (GILLAVTIIYQYFEIFV). At 463–476 (KEQSEMGSMGALLF) the chain is on the cytoplasmic side.

It belongs to the SecY/SEC61-alpha family. The SEC61 channel-forming translocon complex consists of channel-forming core components SEC61A1, SEC61B and SEC61G and different auxiliary components such as SEC62 and SEC63. The SEC61 channel associates with the multi-pass translocon (MPT) complex.

It is found in the endoplasmic reticulum membrane. Its function is as follows. Component of SEC61 channel-forming translocon complex that mediates transport of signal peptide-containing precursor polypeptides across the endoplasmic reticulum (ER). Forms a ribosome receptor and a gated pore in the ER membrane, both functions required for cotranslational translocation of nascent polypeptides. May cooperate with auxiliary protein SEC62, SEC63 and HSPA5/BiP to enable post-translational transport of small presecretory proteins. The SEC61 channel is also involved in ER membrane insertion of transmembrane proteins: it mediates membrane insertion of the first few transmembrane segments of proteins, while insertion of subsequent transmembrane regions of multi-pass membrane proteins is mediated by the multi-pass translocon (MPT) complex. The protein is Protein transport protein Sec61 subunit alpha isoform A (sec61aa) of Oncorhynchus mykiss (Rainbow trout).